Consider the following 172-residue polypeptide: Large ribosomal subunit protein uL10 (172 aa).

Belongs to the universal ribosomal protein uL10 family. As to quaternary structure, part of the ribosomal stalk of the 50S ribosomal subunit. The N-terminus interacts with L11 and the large rRNA to form the base of the stalk. The C-terminus forms an elongated spine to which L12 dimers bind in a sequential fashion forming a multimeric L10(L12)X complex.

Its function is as follows. Forms part of the ribosomal stalk, playing a central role in the interaction of the ribosome with GTP-bound translation factors. In Rhizobium johnstonii (strain DSM 114642 / LMG 32736 / 3841) (Rhizobium leguminosarum bv. viciae), this protein is Large ribosomal subunit protein uL10.